A 201-amino-acid polypeptide reads, in one-letter code: Putative ankyrin repeat protein R868 (201 aa).

ANK repeat units follow at residues 125-154 (YENN…NCYF) and 156-188 (KAKK…DYNF).

The protein is Putative ankyrin repeat protein R868 of Acanthamoeba polyphaga (Amoeba).